A 1060-amino-acid chain; its full sequence is Carbamoyl phosphate synthase large chain (1060 aa).

The interval 1-400 (MPRDESINKV…SLNKAIRSLD (400 aa)) is carboxyphosphate synthetic domain. Residues Arg-127, Arg-167, Gly-173, Gly-174, Gln-206, Val-208, Glu-213, Gly-240, Ile-241, His-242, Gln-283, and Glu-297 each coordinate ATP. The 196-residue stretch at 131-326 (DSFMKKLNEP…IAKIAAKIAV (196 aa)) folds into the ATP-grasp 1 domain. Mg(2+) is bound by residues Gln-283, Glu-297, and Asn-299. Mn(2+) contacts are provided by Gln-283, Glu-297, and Asn-299. An oligomerization domain region spans residues 401–539 (IGADGFTETP…YGCYDLEDEV (139 aa)). The carbamoyl phosphate synthetic domain stretch occupies residues 540-926 (EVSDRRKVLI…YKSQLSASMD (387 aa)). Positions 664 to 858 (TEVLNKLGIP…LAKMAARLMM (195 aa)) constitute an ATP-grasp 2 domain. ATP contacts are provided by Arg-700, Lys-739, Leu-741, Glu-746, Gly-771, Val-772, His-773, Ser-774, Gln-814, and Glu-829. Gln-814, Glu-829, and Asn-831 together coordinate Mg(2+). Mn(2+) contacts are provided by Gln-814, Glu-829, and Asn-831. The MGS-like domain maps to 925-1060 (MDLLNEGKVF…VKSLDEYHGM (136 aa)). The segment at 927-1060 (LLNEGKVFIS…VKSLDEYHGM (134 aa)) is allosteric domain.

The protein belongs to the CarB family. As to quaternary structure, composed of two chains; the small (or glutamine) chain promotes the hydrolysis of glutamine to ammonia, which is used by the large (or ammonia) chain to synthesize carbamoyl phosphate. Tetramer of heterodimers (alpha,beta)4. It depends on Mg(2+) as a cofactor. The cofactor is Mn(2+).

The catalysed reaction is hydrogencarbonate + L-glutamine + 2 ATP + H2O = carbamoyl phosphate + L-glutamate + 2 ADP + phosphate + 2 H(+). The enzyme catalyses hydrogencarbonate + NH4(+) + 2 ATP = carbamoyl phosphate + 2 ADP + phosphate + 2 H(+). The protein operates within amino-acid biosynthesis; L-arginine biosynthesis; carbamoyl phosphate from bicarbonate: step 1/1. It participates in pyrimidine metabolism; UMP biosynthesis via de novo pathway; (S)-dihydroorotate from bicarbonate: step 1/3. Large subunit of the glutamine-dependent carbamoyl phosphate synthetase (CPSase). CPSase catalyzes the formation of carbamoyl phosphate from the ammonia moiety of glutamine, carbonate, and phosphate donated by ATP, constituting the first step of 2 biosynthetic pathways, one leading to arginine and/or urea and the other to pyrimidine nucleotides. The large subunit (synthetase) binds the substrates ammonia (free or transferred from glutamine from the small subunit), hydrogencarbonate and ATP and carries out an ATP-coupled ligase reaction, activating hydrogencarbonate by forming carboxy phosphate which reacts with ammonia to form carbamoyl phosphate. This Methanothermobacter thermautotrophicus (strain ATCC 29096 / DSM 1053 / JCM 10044 / NBRC 100330 / Delta H) (Methanobacterium thermoautotrophicum) protein is Carbamoyl phosphate synthase large chain.